Consider the following 590-residue polypeptide: UvrABC system protein C (590 aa).

The GIY-YIG domain occupies 14–91; the sequence is DQPGCYLMKD…IKKYDPKYNV (78 aa). One can recognise a UVR domain in the interval 196–231; that stretch reads NEVKKELEAKMLEASENLQFERAKEFRDQIAHIEST.

This sequence belongs to the UvrC family. As to quaternary structure, interacts with UvrB in an incision complex.

Its subcellular location is the cytoplasm. The UvrABC repair system catalyzes the recognition and processing of DNA lesions. UvrC both incises the 5' and 3' sides of the lesion. The N-terminal half is responsible for the 3' incision and the C-terminal half is responsible for the 5' incision. This chain is UvrABC system protein C, found in Bacillus licheniformis (strain ATCC 14580 / DSM 13 / JCM 2505 / CCUG 7422 / NBRC 12200 / NCIMB 9375 / NCTC 10341 / NRRL NRS-1264 / Gibson 46).